The following is a 221-amino-acid chain: Ribonuclease HII (221 aa).

Residues 29 to 220 (RRVAGVDEVG…LRDLQAGEIG (192 aa)) enclose the RNase H type-2 domain. Residues aspartate 35, glutamate 36, and aspartate 129 each contribute to the a divalent metal cation site. The segment at 198–221 (LGPSPQHRRSFAPLRDLQAGEIGG) is disordered.

This sequence belongs to the RNase HII family. Mn(2+) is required as a cofactor. The cofactor is Mg(2+).

It localises to the cytoplasm. It carries out the reaction Endonucleolytic cleavage to 5'-phosphomonoester.. Functionally, endonuclease that specifically degrades the RNA of RNA-DNA hybrids. In Synechococcus sp. (strain JA-3-3Ab) (Cyanobacteria bacterium Yellowstone A-Prime), this protein is Ribonuclease HII.